Reading from the N-terminus, the 371-residue chain is Caytaxin (371 aa).

The tract at residues 1–54 (MGTTEATLRMENVDVKEEWQDEDLPRPLPEETGVELLGSPVEDTSSPPNTLNFN) is disordered. Basic and acidic residues predominate over residues 11–29 (ENVDVKEEWQDEDLPRPLP). A compositionally biased stretch (polar residues) spans 42–53 (EDTSSPPNTLNF). A required for interaction with KLC1 region spans residues 115–120 (ELEWGD). Positions 171–328 (IRPYMKVVTH…CVLQYEEERL (158 aa)) constitute a CRAL-TRIO domain. Residues 190-371 (AIIVFAACFL…VTEDQETSMS (182 aa)) form a mediates interaction with GLS region. The tract at residues 331-371 (RRESARPQPEFVMPRSEEKPEVAPVENRSAPVTEDQETSMS) is disordered.

In terms of assembly, interacts with KLC1; may link mitochondria to KLC1 and regulate mitochondria localization into neuron projections. Interacts with GLS; the interaction is direct and may control GLS localization, negatively regulating its activity. Interacts with PIN1 (via WW domain); upon NGF stimulation. The interaction with PIN1 and GLS is competitive. Post-translationally, cleaved by CASP3 and CASP7. The potential C-terminal product released by CASP3 cleavage may inhibit the ERK signaling pathway through MAP2K2. May be ubiquitinated by STUB1.

It localises to the cell projection. The protein localises to the axon. The protein resides in the dendrite. It is found in the presynapse. Its subcellular location is the mitochondrion. It localises to the growth cone. The protein localises to the cytoplasm. Functions in the development of neural tissues, particularly the postnatal maturation of the cerebellar cortex. May play a role in neurotransmission through regulation of glutaminase/GLS, an enzyme responsible for the production in neurons of the glutamate neurotransmitter. Alternatively, may regulate the localization of mitochondria within axons and dendrites. The polypeptide is Caytaxin (ATCAY) (Macaca fascicularis (Crab-eating macaque)).